Consider the following 529-residue polypeptide: L-ornithine N(5)-monooxygenase (529 aa).

FAD-binding positions include 100–108 (EKQPQFAWH) and Q119. Residue K124 coordinates substrate. An FAD-binding site is contributed by V185. Position 270 to 273 (270 to 273 (NGQS)) interacts with NADP(+). Substrate contacts are provided by residues 309-312 (NEIF) and N339. 339–341 (NYG) contacts NADP(+). 493–495 (TLL) contacts FAD. S496 contacts substrate.

This sequence belongs to the lysine N(6)-hydroxylase/L-ornithine N(5)-oxygenase family. As to quaternary structure, homotetramer. The cofactor is FAD.

The catalysed reaction is L-ornithine + NADPH + O2 = N(5)-hydroxy-L-ornithine + NADP(+) + H2O. It carries out the reaction L-ornithine + NADH + O2 = N(5)-hydroxy-L-ornithine + NAD(+) + H2O. Its pathway is siderophore biosynthesis. Functionally, L-ornithine N(5)-monooxygenase; part of the gene cluster that mediates the biosynthesis of hydroxamate-containing siderophores that play a critical role in virulence. Cochliobolus heterostrophus produces extracellular coprogen-type siderophores including coprogen, neocoprogen I and neocoprogen II, as well as the intracellular siderophore ferricrocin. The role of extracellular siderophores is to supply iron to their producers in planta and the intracellular ferricrocin is required for intracellular iron distribution and storage with a crucial role in ascus and ascospore development. SIDA2 catalyzes the conversion of L-ornithine to N(5)-hydroxyornithine, the first step in the biosynthesis of all hydroxamate-containing siderophores. The assembly of extracellular coprogen-type siderophores is then performed by the nonribosomal peptide synthetase (NRPS) NPS6 whereas the intracellular siderophore ferricrocin is assembled by NPS2. This chain is L-ornithine N(5)-monooxygenase, found in Cochliobolus heterostrophus (strain C4 / ATCC 48331 / race T) (Southern corn leaf blight fungus).